Reading from the N-terminus, the 341-residue chain is Aromatic amino acid aminotransferase (341 aa).

Lys213 bears the N6-(pyridoxal phosphate)lysine mark.

The protein belongs to the class-II pyridoxal-phosphate-dependent aminotransferase family. Homodimer. The cofactor is pyridoxal 5'-phosphate.

The enzyme catalyses an aromatic L-alpha-amino acid + 2-oxoglutarate = an aromatic oxo-acid + L-glutamate. Its function is as follows. Aminotransferase that catalyzes the conversion of aromatic amino acids and 2-oxoglutarate into corresponding aromatic oxo acids and L-glutamate. May catalyze the transamination reaction in phenylalanine biosynthesis. The polypeptide is Aromatic amino acid aminotransferase (Corynebacterium glutamicum (strain ATCC 13032 / DSM 20300 / JCM 1318 / BCRC 11384 / CCUG 27702 / LMG 3730 / NBRC 12168 / NCIMB 10025 / NRRL B-2784 / 534)).